We begin with the raw amino-acid sequence, 60 residues long: UPF0434 protein YcaR (60 aa).

This sequence belongs to the UPF0434 family.

This chain is UPF0434 protein YcaR, found in Escherichia coli O81 (strain ED1a).